The following is a 383-amino-acid chain: Dimethylsulfoniopropionate lyase 6 (383 aa).

Belongs to the aspartate/glutamate racemases family. ALMA1 subfamily. Homotetramer.

It carries out the reaction S,S-dimethyl-beta-propiothetin = acrylate + dimethyl sulfide + H(+). In terms of biological role, mediates cleavage of dimethylsulfoniopropionate (DMSP) into dimethyl sulfide (DMS) and acrylate. DMS is the principal form by which sulfur is transported from oceans to the atmosphere and is a key component of the ocean sulfur cycle. This Emiliania huxleyi (strain CCMP1516) protein is Dimethylsulfoniopropionate lyase 6.